We begin with the raw amino-acid sequence, 352 residues long: Histidine biosynthesis bifunctional protein HisB (352 aa).

The segment at 1 to 164 is histidinol-phosphatase; that stretch reads MSQKILFIDR…EIENEILSSF (164 aa). The Nucleophile role is filled by Asp-9. Mg(2+)-binding residues include Asp-9 and Asp-11. Asp-11 acts as the Proton donor in catalysis. Zn(2+) contacts are provided by Cys-93, His-95, Cys-101, and Cys-103. Asp-130 is a Mg(2+) binding site. An imidazoleglycerol-phosphate dehydratase region spans residues 165–352; that stretch reads RSASYQRTTK…ENLASSKGVI (188 aa).

The protein in the N-terminal section; belongs to the histidinol-phosphatase family. It in the C-terminal section; belongs to the imidazoleglycerol-phosphate dehydratase family. The cofactor is Mg(2+). Zn(2+) serves as cofactor.

The protein resides in the cytoplasm. It carries out the reaction D-erythro-1-(imidazol-4-yl)glycerol 3-phosphate = 3-(imidazol-4-yl)-2-oxopropyl phosphate + H2O. It catalyses the reaction L-histidinol phosphate + H2O = L-histidinol + phosphate. Its pathway is amino-acid biosynthesis; L-histidine biosynthesis; L-histidine from 5-phospho-alpha-D-ribose 1-diphosphate: step 6/9. It participates in amino-acid biosynthesis; L-histidine biosynthesis; L-histidine from 5-phospho-alpha-D-ribose 1-diphosphate: step 8/9. This chain is Histidine biosynthesis bifunctional protein HisB, found in Campylobacter jejuni subsp. jejuni serotype O:2 (strain ATCC 700819 / NCTC 11168).